We begin with the raw amino-acid sequence, 184 residues long: Adenine phosphoribosyltransferase (184 aa).

It belongs to the purine/pyrimidine phosphoribosyltransferase family. Homodimer.

It localises to the cytoplasm. It catalyses the reaction AMP + diphosphate = 5-phospho-alpha-D-ribose 1-diphosphate + adenine. Its pathway is purine metabolism; AMP biosynthesis via salvage pathway; AMP from adenine: step 1/1. Its function is as follows. Catalyzes a salvage reaction resulting in the formation of AMP, that is energically less costly than de novo synthesis. The polypeptide is Adenine phosphoribosyltransferase (Sphingopyxis alaskensis (strain DSM 13593 / LMG 18877 / RB2256) (Sphingomonas alaskensis)).